The sequence spans 501 residues: MSIFLCFLLLLLLLLVTIIFTRKSQSSKLKLPPGPPKLPIIGNLHYLNGLPHKCLLNLWKIHGPVMQLQLGYVPLVVISSNQAAEEVLKTHDLDCCSRPETIASKTISYNFKDIGFAPYGEEWRALRKLAVIELFSLKKFNSFRYIREEENDLLVKKLSEASEKQSPVNLKKALFTLSASIVCRLAFGQNLHESEFIDEDSMEDLASRSEKIQAKFAFSNFFPGGWILDKITGQSKSLNEIFADLDGFFNQVLDDHLKPGRKVLETPDVVDVMIDMMNKQSQDGSFKLTTDHIKGIISDIFLAGVNTSATTILWAMTELIRNPRVMKKVQDEVRTVLGEKRDRITEQDLNQLNYFKLVIKETFRLHPAAPLLLPREAMAKIKIQGYDIPEKTQIMVNVYAIGRDPDLWENPEEFKPERFVDSSVDYRGLNFELLPFGSGRRICPGMTMGIATVELGLLNLLYFFDWGLPEGRTVKDIDLEEEGAIIIGKKVSLELVPTRRQ.

Residues 1–21 (MSIFLCFLLLLLLLLVTIIFT) form a helical membrane-spanning segment. Cysteine 443 contacts heme.

It belongs to the cytochrome P450 family. It depends on heme as a cofactor.

It is found in the membrane. This is Cytochrome P450 71B23 (CYP71B23) from Arabidopsis thaliana (Mouse-ear cress).